The following is a 757-amino-acid chain: Transmembrane channel-like protein 1 (757 aa).

Positions 1-74 (MLQIQVEEKE…RRRLRRGAEE (74 aa)) are disordered. Residues 1–176 (MLQIQVEEKE…KIKAIESQFG (176 aa)) are Cytoplasmic-facing. Positions 8-23 (EKEEDTEESSSEEEED) are enriched in acidic residues. Phosphoserine is present on Ser30. Thr38 carries the phosphothreonine modification. The segment covering 43–54 (NEDDPEPEPEDE) has biased composition (acidic residues). The interval 81-130 (EELERLKALLDENRQMIATVKCKPWKMEKKIEVLKEAKKFVSENEGALGK) is required for interaction with CIB2. Ser122 carries the phosphoserine modification. The helical transmembrane segment at 177 to 214 (SSVASYFLFLRWMYGVNMVLFVLTFSLIMLPEYLWGLP) threads the bilayer. At 215 to 265 (YGSLPRKTVPRAEEASAANFGVLYDFNGLAQYSVLFYGYYDNKRTIGWLNF) the chain is on the extracellular side. Residues 266–297 (RLPLSYFLVGIMCIGYSFLVVLKAMTKNIGDD) form a helical membrane-spanning segment. Positions 298 to 352 (GGGDDNTFNFSWKVFCSWDYLIGNPETADNKFNSITMNFKEAIIEERAAQVEENI) are required for interaction with CIB2. The Cytoplasmic portion of the chain corresponds to 298-353 (GGGDDNTFNFSWKVFCSWDYLIGNPETADNKFNSITMNFKEAIIEERAAQVEENIH). Ser308 is subject to Phosphoserine. Residues 354-384 (LIRFLRFLANFFVFLTLGASGYLIFWAVKRS) form a helical membrane-spanning segment. Topologically, residues 385 to 396 (QEFAQQDPDTLG) are extracellular. At Thr394 the chain carries Phosphothreonine. The chain crosses the membrane as a helical span at residues 397-424 (WWEKNEMNMVMSLLGMFCPTLFDLFAEL). Residues 425 to 428 (EDYH) are Cytoplasmic-facing. The helical transmembrane segment at 429 to 463 (PLIALKWLLGRIFALLLGNLYVFILALMDEINNKI) threads the bilayer. Over 464–512 (EEEKLVKANITLWEANMIKAYNESLSGLSGNTTGAPFFVHPADVPRGPC) the chain is Extracellular. The helical transmembrane segment at 513–550 (WETMVGQEFVRLTVSDVLTTYVTILIGDFLRACFVRFC) threads the bilayer. Topologically, residues 551–569 (NYCWCWDLEYGYPSYTEFD) are cytoplasmic. Residues 570 to 590 (ISGNVLALIFNQGMIWMGSFF) traverse the membrane as a helical segment. The Extracellular segment spans residues 591–593 (APS). A helical transmembrane segment spans residues 594-616 (LPGINILRLHTSMYFQCWAVMCC). Over 617–630 (NVPEARVFKASRSN) the chain is Cytoplasmic. The helical transmembrane segment at 631-654 (NFYLGMLLLILFLSTMPVLYMIVS) threads the bilayer. Residues 655–697 (LPPSFDCGPFSGKNRMFEVIGETLEHDFPSWMAKILRQLSNPG) lie on the Extracellular side of the membrane. Residues 698-731 (LVIAVILVMVLTIYYLNATAKGQKAANLDLKKKM) form a helical membrane-spanning segment. Residues 732–757 (KQQALENKMRNKKMAAARAAAAAGGQ) are Cytoplasmic-facing.

Belongs to the TMC family. Forms the MET channel composed of TMC dimer (TMC1 or TMC2), TMIE, TOMT, CIB (CIB2 or CIB3), LHFPL5 and PCDH15. Interacts with PIEZO1 and PIEZO2; the interaction may be part of the MET complex. The interaction of TMC1 and TMC2 with TOMT is required for the transportation of TMC1/2 into the stereocilia of hair cells. Interacts (via N-terminus) with both isoforms CD1 and CD3 of PCDH15. Can form a heterodimer with TMC2, TMC5 or TMC7. As to expression, detected in cochlear inner and outer hair cells and in neurosensory epithelia of the vestibular end organs. Also expressed in cortex, cerebellum, eye, colon, ovary and testis.

It is found in the cell membrane. The enzyme catalyses Ca(2+)(in) = Ca(2+)(out). Its function is as follows. Pore-forming subunit of the mechanotransducer (MET) non-selective cation channel complex located at the tips of stereocilia of cochlear hair cells and that mediates sensory transduction in the auditory system. The MET complex is composed of two dimeric pore-forming ion-conducting transmembrane TMC (TMC1 or TMC2) subunits, several auxiliary proteins including LHFPL5, TMIE, CIB2/3 and TOMT, the tip-link PCDH15, and possibly the PIEZO subunits. MET channel is activated by tension in the tip-link extending from the side wall of one stereocilium to the tip of the adjacent shorter stereocilium, where the channel is located. TMC1 MET channel is highly permeable to calcium and likely transports monovalent cations. Also involved in vestibular hair cells transduction current. The chain is Transmembrane channel-like protein 1 from Mus musculus (Mouse).